The primary structure comprises 646 residues: Heat shock 70 kDa protein (646 aa).

The span at 613-632 (GGAPGGMPGAAPGGFPGGAP) shows a compositional bias: gly residues. The interval 613-646 (GGAPGGMPGAAPGGFPGGAPGSNDNEGPTVEEVD) is disordered.

It belongs to the heat shock protein 70 family.

The polypeptide is Heat shock 70 kDa protein (hsps-1) (Neurospora crassa (strain ATCC 24698 / 74-OR23-1A / CBS 708.71 / DSM 1257 / FGSC 987)).